A 250-amino-acid polypeptide reads, in one-letter code: tRNA (guanine-N(1)-)-methyltransferase (250 aa).

S-adenosyl-L-methionine contacts are provided by residues Gly-113 and 133-138 (IGDYVL).

It belongs to the RNA methyltransferase TrmD family. In terms of assembly, homodimer.

The protein localises to the cytoplasm. It carries out the reaction guanosine(37) in tRNA + S-adenosyl-L-methionine = N(1)-methylguanosine(37) in tRNA + S-adenosyl-L-homocysteine + H(+). In terms of biological role, specifically methylates guanosine-37 in various tRNAs. In Photorhabdus laumondii subsp. laumondii (strain DSM 15139 / CIP 105565 / TT01) (Photorhabdus luminescens subsp. laumondii), this protein is tRNA (guanine-N(1)-)-methyltransferase.